A 256-amino-acid polypeptide reads, in one-letter code: Hydroxyacylglutathione hydrolase (256 aa).

Residues H53, H55, D57, H58, H111, D128, and H166 each coordinate Zn(2+).

It belongs to the metallo-beta-lactamase superfamily. Glyoxalase II family. Monomer. Zn(2+) serves as cofactor.

The catalysed reaction is an S-(2-hydroxyacyl)glutathione + H2O = a 2-hydroxy carboxylate + glutathione + H(+). Its pathway is secondary metabolite metabolism; methylglyoxal degradation; (R)-lactate from methylglyoxal: step 2/2. Its function is as follows. Thiolesterase that catalyzes the hydrolysis of S-D-lactoyl-glutathione to form glutathione and D-lactic acid. The sequence is that of Hydroxyacylglutathione hydrolase from Thiobacillus denitrificans (strain ATCC 25259 / T1).